We begin with the raw amino-acid sequence, 351 residues long: UPF0252 protein MJECL39 (351 aa).

Transmembrane regions (helical) follow at residues 58-78 and 91-111; these read FITF…VWLW and IIIC…LCGV.

The protein belongs to the UPF0252 family.

The protein localises to the cell membrane. This chain is UPF0252 protein MJECL39, found in Methanocaldococcus jannaschii (strain ATCC 43067 / DSM 2661 / JAL-1 / JCM 10045 / NBRC 100440) (Methanococcus jannaschii).